The primary structure comprises 440 residues: Indoleamine 2,3-dioxygenase qulI (440 aa).

Residue H347 coordinates heme.

This sequence belongs to the indoleamine 2,3-dioxygenase family. In terms of assembly, monomer. Heme is required as a cofactor.

It carries out the reaction D-tryptophan + O2 = N-formyl-D-kynurenine. The catalysed reaction is L-tryptophan + O2 = N-formyl-L-kynurenine. The protein operates within secondary metabolite biosynthesis. In terms of biological role, indoleamine 2,3-dioxygenase; part of the gene cluster that mediates the biosynthesis of quinolactacin A2 (QUL A2), a fungal alkaloid that features a quinolone-gamma-lactam hybrid, which is a potential pharmacophore for the treatment of cancer and Alzheimer's disease. The quinolone-gamma-lactam hybrid scaffold is synthesized from the combination of L-isoleucine (L-Ile) and the nonproteinogenic amino acid L-kynurenine, followed by quinolone cyclization, oxidative decarboxylation, and lactam formation. Additionally, the N-methyl group is derived from methionine, which might be catalyzed by an S-adenosylmethionine (SAM)-dependent methyltransferase. Bioconversion of L-tryptophan to L-kynurenine could be catalyzed by the indoleamine-2,3-dioxygenase (IDO) qulI to produce an unstable product, N-formyl-L-kynurenine, followed by kynurenine formamidase catalyzed hydrolysis. QulM then acts as a methyltransferase that methylates L-kynurenine at the N-4 position. The FMN-dependent alpha-hydroxy acid dehydrogenase qulF than functions as an oxidative decarboxylase which converts N-methylkynurenine into 2-aminobenzoylacetamide via 2 tandem reactions, including dehydrogenation and decarboxylation. An amidase located outside of the qul gene cluster further produces the unstable beta-keto acid precursor N-methyl-2-aminobenzoylacetate, which could be spontaneously dehydrated to form N-methyl-4-hydroxy-2-quinolone. The NRPS qulB is able to incorporate N-methyl-2-aminobenzoylacetate and efficiently compete with the spontaneous reaction. By further extending the beta-keto acid with L-Ile, qulA performs a Dieckmann condensation to form the gamma-lactam ring and release a 4-ketopyrrolidinone intermediate from the assembly line. This intermediate could plausibly further undergo a spontaneous cyclization to yield the final quinolone-gamma-lactam hybrid structure. The sequence is that of Indoleamine 2,3-dioxygenase qulI from Penicillium citrinum.